The primary structure comprises 224 residues: Germin-like protein 8-11 (224 aa).

The N-terminal stretch at 1–22 is a signal peptide; the sequence is MASSSFLLLATLLAMASWQGMA. The cysteines at positions 32 and 47 are disulfide-linked. One can recognise a Cupin type-1 domain in the interval 62–212; that stretch reads AMLDTPRKTN…AFQVEKGTID (151 aa). Asn76 carries an N-linked (GlcNAc...) asparagine glycan. The Mn(2+) site is built by His109, His111, Glu116, and His157.

It belongs to the germin family. In terms of assembly, oligomer (believed to be a pentamer but probably hexamer).

The protein resides in the secreted. The protein localises to the extracellular space. It is found in the apoplast. Its function is as follows. Plays a role in broad-spectrum disease resistance. Probably has no oxalate oxidase activity even if the active site is conserved. This Oryza sativa subsp. japonica (Rice) protein is Germin-like protein 8-11.